The following is a 229-amino-acid chain: Ribonuclease 3 (229 aa).

The RNase III domain maps to 5–127 (LSRLERQLGY…LIGAIYLDAG (123 aa)). Glu-40 is a Mg(2+) binding site. Asp-44 is an active-site residue. Mg(2+)-binding residues include Asp-113 and Glu-116. Glu-116 is a catalytic residue. Residues 154–224 (DPKTRLQEFL…AAAALIALGV (71 aa)) enclose the DRBM domain.

It belongs to the ribonuclease III family. Homodimer. Mg(2+) serves as cofactor.

Its subcellular location is the cytoplasm. The enzyme catalyses Endonucleolytic cleavage to 5'-phosphomonoester.. Its function is as follows. Digests double-stranded RNA. Involved in the processing of primary rRNA transcript to yield the immediate precursors to the large and small rRNAs (23S and 16S). Processes some mRNAs, and tRNAs when they are encoded in the rRNA operon. Processes pre-crRNA and tracrRNA of type II CRISPR loci if present in the organism. The protein is Ribonuclease 3 of Pseudomonas fluorescens (strain ATCC BAA-477 / NRRL B-23932 / Pf-5).